The primary structure comprises 388 residues: Homeobox protein Hox-A13 (388 aa).

The segment at residues 322–381 is a DNA-binding region (homeobox); the sequence is GRKKRVPYTKVQLKELEREYATNKFITKDKRRRISATTNLSERQVTIWFQNRRVKEKKVI.

This sequence belongs to the Abd-B homeobox family. Binds DNA as a homodimer. Interacts with MEIS1, MEIS2 and MEIS3.

It is found in the nucleus. Its function is as follows. Sequence-specific, AT-rich binding transcription factor which is part of a developmental regulatory system that provides cells with specific positional identities on the anterior-posterior axis. Sequence-specific transcription factor which is part of a developmental regulatory system that provides cells with specific positional identities on the anterior-posterior axis. The sequence is that of Homeobox protein Hox-A13 (HOXA13) from Homo sapiens (Human).